Consider the following 117-residue polypeptide: Mediator of RNA polymerase II transcription subunit 11 (117 aa).

Residue Ala2 is modified to N-acetylalanine.

Belongs to the Mediator complex subunit 11 family. Component of the Mediator complex, which is composed of MED1, MED4, MED6, MED7, MED8, MED9, MED10, MED11, MED12, MED13, MED13L, MED14, MED15, MED16, MED17, MED18, MED19, MED20, MED21, MED22, MED23, MED24, MED25, MED26, MED27, MED29, MED30, MED31, CCNC, CDK8 and CDC2L6/CDK11. The MED12, MED13, CCNC and CDK8 subunits form a distinct module termed the CDK8 module. Mediator containing the CDK8 module is less active than Mediator lacking this module in supporting transcriptional activation. Individual preparations of the Mediator complex lacking one or more distinct subunits have been variously termed ARC, CRSP, DRIP, PC2, SMCC and TRAP.

The protein resides in the nucleus. Its function is as follows. Component of the Mediator complex, a coactivator involved in the regulated transcription of nearly all RNA polymerase II-dependent genes. Mediator functions as a bridge to convey information from gene-specific regulatory proteins to the basal RNA polymerase II transcription machinery. Mediator is recruited to promoters by direct interactions with regulatory proteins and serves as a scaffold for the assembly of a functional pre-initiation complex with RNA polymerase II and the general transcription factors. This is Mediator of RNA polymerase II transcription subunit 11 (MED11) from Bos taurus (Bovine).